We begin with the raw amino-acid sequence, 174 residues long: ATP synthase subunit b (174 aa).

A helical transmembrane segment spans residues 15 to 33 (NPGLVIWTLVTFSVVVFVL).

The protein belongs to the ATPase B chain family. F-type ATPases have 2 components, F(1) - the catalytic core - and F(0) - the membrane proton channel. F(1) has five subunits: alpha(3), beta(3), gamma(1), delta(1), epsilon(1). F(0) has three main subunits: a(1), b(2) and c(10-14). The alpha and beta chains form an alternating ring which encloses part of the gamma chain. F(1) is attached to F(0) by a central stalk formed by the gamma and epsilon chains, while a peripheral stalk is formed by the delta and b chains.

The protein resides in the cell inner membrane. Its function is as follows. F(1)F(0) ATP synthase produces ATP from ADP in the presence of a proton or sodium gradient. F-type ATPases consist of two structural domains, F(1) containing the extramembraneous catalytic core and F(0) containing the membrane proton channel, linked together by a central stalk and a peripheral stalk. During catalysis, ATP synthesis in the catalytic domain of F(1) is coupled via a rotary mechanism of the central stalk subunits to proton translocation. Functionally, component of the F(0) channel, it forms part of the peripheral stalk, linking F(1) to F(0). The chain is ATP synthase subunit b from Leptospira biflexa serovar Patoc (strain Patoc 1 / Ames).